Here is a 421-residue protein sequence, read N- to C-terminus: Acyl-coenzyme A thioesterase 5 (421 aa).

Residues Ser232, Asp326, and His360 each act as charge relay system in the active site. Positions 419 to 421 match the Microbody targeting signal motif; sequence AKL.

The protein belongs to the C/M/P thioester hydrolase family. As to expression, highly expressed in spleen, brain, testis and proximal and distal intestine; expressed at low level in the liver.

The protein resides in the peroxisome. The enzyme catalyses hexadecanoyl-CoA + H2O = hexadecanoate + CoA + H(+). It carries out the reaction decanoyl-CoA + H2O = decanoate + CoA + H(+). It catalyses the reaction octanoyl-CoA + H2O = octanoate + CoA + H(+). The catalysed reaction is dodecanoyl-CoA + H2O = dodecanoate + CoA + H(+). The enzyme catalyses tetradecanoyl-CoA + H2O = tetradecanoate + CoA + H(+). It carries out the reaction octadecanoyl-CoA + H2O = octadecanoate + CoA + H(+). It catalyses the reaction eicosanoyl-CoA + H2O = eicosanoate + CoA + H(+). The catalysed reaction is (9Z)-octadecenoyl-CoA + H2O = (9Z)-octadecenoate + CoA + H(+). The enzyme catalyses (9Z,12Z)-octadecadienoyl-CoA + H2O = (9Z,12Z)-octadecadienoate + CoA + H(+). It carries out the reaction (5Z,8Z,11Z,14Z)-eicosatetraenoyl-CoA + H2O = (5Z,8Z,11Z,14Z)-eicosatetraenoate + CoA + H(+). It catalyses the reaction (9Z)-hexadecenoyl-CoA + H2O = (9Z)-hexadecenoate + CoA + H(+). Its pathway is lipid metabolism; fatty acid metabolism. Catalyzes the hydrolysis of acyl-CoAs into free fatty acids and coenzyme A (CoASH), regulating their respective intracellular levels. Mainly active on medium-chain acyl-CoAs. Seems to be involved in intraperoxisomal regulation of acyl-CoA levels, but not CoASH levels. May have a function in termination of beta-oxidation of fatty acids. This Mus musculus (Mouse) protein is Acyl-coenzyme A thioesterase 5 (Acot5).